We begin with the raw amino-acid sequence, 463 residues long: L-seryl-tRNA(Sec) selenium transferase (463 aa).

An N6-(pyridoxal phosphate)lysine modification is found at lysine 295.

Belongs to the SelA family. Homodecamer; pentamer of dimers. Binds only one seryl-tRNA(Sec) per dimer. It depends on pyridoxal 5'-phosphate as a cofactor.

Its subcellular location is the cytoplasm. It catalyses the reaction L-seryl-tRNA(Sec) + selenophosphate + H(+) = L-selenocysteinyl-tRNA(Sec) + phosphate. The protein operates within aminoacyl-tRNA biosynthesis; selenocysteinyl-tRNA(Sec) biosynthesis; selenocysteinyl-tRNA(Sec) from L-seryl-tRNA(Sec) (bacterial route): step 1/1. In terms of biological role, converts seryl-tRNA(Sec) to selenocysteinyl-tRNA(Sec) required for selenoprotein biosynthesis. This is L-seryl-tRNA(Sec) selenium transferase from Shigella flexneri.